Here is a 239-residue protein sequence, read N- to C-terminus: Ribonuclease PH (239 aa).

Residues R86 and 124–126 each bind phosphate; that span reads GTR.

Belongs to the RNase PH family. In terms of assembly, homohexameric ring arranged as a trimer of dimers.

The enzyme catalyses tRNA(n+1) + phosphate = tRNA(n) + a ribonucleoside 5'-diphosphate. Its function is as follows. Phosphorolytic 3'-5' exoribonuclease that plays an important role in tRNA 3'-end maturation. Removes nucleotide residues following the 3'-CCA terminus of tRNAs; can also add nucleotides to the ends of RNA molecules by using nucleoside diphosphates as substrates, but this may not be physiologically important. Probably plays a role in initiation of 16S rRNA degradation (leading to ribosome degradation) during starvation. The protein is Ribonuclease PH of Rickettsia bellii (strain OSU 85-389).